We begin with the raw amino-acid sequence, 117 residues long: Large ribosomal subunit protein bL20 (117 aa).

This sequence belongs to the bacterial ribosomal protein bL20 family.

Functionally, binds directly to 23S ribosomal RNA and is necessary for the in vitro assembly process of the 50S ribosomal subunit. It is not involved in the protein synthesizing functions of that subunit. The polypeptide is Large ribosomal subunit protein bL20 (Nitratidesulfovibrio vulgaris (strain DP4) (Desulfovibrio vulgaris)).